The following is a 121-amino-acid chain: Large ribosomal subunit protein eL8 (121 aa).

Belongs to the eukaryotic ribosomal protein eL8 family. Part of the 50S ribosomal subunit. Probably part of the RNase P complex.

It localises to the cytoplasm. Functionally, multifunctional RNA-binding protein that recognizes the K-turn motif in ribosomal RNA, the RNA component of RNase P, box H/ACA, box C/D and box C'/D' sRNAs. The sequence is that of Large ribosomal subunit protein eL8 from Thermoplasma acidophilum (strain ATCC 25905 / DSM 1728 / JCM 9062 / NBRC 15155 / AMRC-C165).